We begin with the raw amino-acid sequence, 668 residues long: Packaging protein UL32 homolog (668 aa).

Positions 1 to 10 are enriched in polar residues; sequence MNPSTHVSSN. A disordered region spans residues 1-35; the sequence is MNPSTHVSSNGPTTPPHGPHTTFLPPTSPAPSTSS. Residues 19-35 are compositionally biased toward low complexity; sequence PHTTFLPPTSPAPSTSS. 4 residues coordinate Zn(2+): cysteine 200, cysteine 203, histidine 276, and cysteine 282. Residues 200 to 282 are zinc finger 1; the sequence is CNLCAIISIC…FHLHFFINRC (83 aa). The disordered stretch occupies residues 401–430; it reads IEEEEDEEGGEKGGDDPGRHNGGGTSGGFS. Over residues 410 to 419 the composition is skewed to basic and acidic residues; the sequence is GEKGGDDPGR. Zn(2+) contacts are provided by cysteine 459, cysteine 462, histidine 567, and cysteine 574. The segment at 459-574 is zinc finger 2; sequence CLLCELMACS…YKHFFCDPQC (116 aa).

Belongs to the herpesviridae UL32 protein family.

It is found in the host cytoplasm. Its subcellular location is the host nucleus. Plays a role in efficient localization of neo-synthesized capsids to nuclear replication compartments, thereby controlling cleavage and packaging of virus genomic DNA. The sequence is that of Packaging protein UL32 homolog (UL52) from Homo sapiens (Human).